We begin with the raw amino-acid sequence, 289 residues long: Probable porphobilinogen deaminase (289 aa).

Cys233 carries the post-translational modification S-(dipyrrolylmethanemethyl)cysteine.

The protein belongs to the HMBS family. Dipyrromethane serves as cofactor.

It carries out the reaction 4 porphobilinogen + H2O = hydroxymethylbilane + 4 NH4(+). The protein operates within porphyrin-containing compound metabolism; protoporphyrin-IX biosynthesis; coproporphyrinogen-III from 5-aminolevulinate: step 2/4. Tetrapolymerization of the monopyrrole PBG into the hydroxymethylbilane pre-uroporphyrinogen in several discrete steps. In Methanothermobacter thermautotrophicus (strain ATCC 29096 / DSM 1053 / JCM 10044 / NBRC 100330 / Delta H) (Methanobacterium thermoautotrophicum), this protein is Probable porphobilinogen deaminase (hemC).